Here is a 61-residue protein sequence, read N- to C-terminus: Photosystem II reaction center protein Z (61 aa).

2 helical membrane-spanning segments follow: residues 5–25 (LTALLVLISLALVVTVPVALA) and 38–58 (NKAFQLWVGLVVAIATADGIS).

Belongs to the PsbZ family. PSII is composed of 1 copy each of membrane proteins PsbA, PsbB, PsbC, PsbD, PsbE, PsbF, PsbH, PsbI, PsbJ, PsbK, PsbL, PsbM, PsbT, PsbX, PsbY, PsbZ, Psb30/Ycf12, at least 3 peripheral proteins of the oxygen-evolving complex and a large number of cofactors. It forms dimeric complexes.

It localises to the plastid. Its subcellular location is the chloroplast thylakoid membrane. Its function is as follows. May control the interaction of photosystem II (PSII) cores with the light-harvesting antenna, regulates electron flow through the 2 photosystem reaction centers. PSII is a light-driven water plastoquinone oxidoreductase, using light energy to abstract electrons from H(2)O, generating a proton gradient subsequently used for ATP formation. In Skeletonema costatum (Marine centric diatom), this protein is Photosystem II reaction center protein Z.